The primary structure comprises 447 residues: Nuclear envelope integral membrane protein 2 (447 aa).

Residues 1-28 (MGPRRLPWARPGPALGLLLLALAGAVPA) form the signal peptide. 5 consecutive transmembrane segments (helical) span residues 144–164 (EMLD…FHFA), 173–193 (FFYL…VLLA), 202–222 (STFW…IYCF), 235–255 (IYVL…CYQH), and 275–295 (AFVF…IIAV). The tract at residues 410-438 (TRTESEQDETTSYIHEGDDENEDEIHEPI) is disordered.

This sequence belongs to the NEMP family.

Its subcellular location is the nucleus inner membrane. The sequence is that of Nuclear envelope integral membrane protein 2 (NEMP2) from Gallus gallus (Chicken).